The sequence spans 102 residues: uncharacterized protein (102 aa).

The next 2 helical transmembrane spans lie at 33–55 (VLEL…LVVL) and 57–79 (VVGV…VVVA).

It is found in the membrane. This is an uncharacterized protein from Saccharomyces cerevisiae (strain ATCC 204508 / S288c) (Baker's yeast).